The following is a 95-amino-acid chain: UPF0213 protein PEPE_0875 (95 aa).

Residues 7–82 (NGFYFYVLRC…KQRTRSSKIK (76 aa)) form the GIY-YIG domain.

Belongs to the UPF0213 family.

This Pediococcus pentosaceus (strain ATCC 25745 / CCUG 21536 / LMG 10740 / 183-1w) protein is UPF0213 protein PEPE_0875.